The primary structure comprises 240 residues: Zinc import ATP-binding protein ZnuC (240 aa).

In terms of domain architecture, ABC transporter spans 1-219; that stretch reads MSLLSIAALD…PAYRAMFGLD (219 aa). 36–43 provides a ligand contact to ATP; the sequence is GPNGSGKT.

This sequence belongs to the ABC transporter superfamily. Zinc importer (TC 3.A.1.15.5) family. The complex is composed of two ATP-binding proteins (ZnuC), two transmembrane proteins (ZnuB) and a solute-binding protein (ZnuA).

It is found in the cell inner membrane. The enzyme catalyses Zn(2+)(out) + ATP(in) + H2O(in) = Zn(2+)(in) + ADP(in) + phosphate(in) + H(+)(in). Functionally, part of the ABC transporter complex ZnuABC involved in zinc import. Responsible for energy coupling to the transport system. This chain is Zinc import ATP-binding protein ZnuC, found in Chromohalobacter salexigens (strain ATCC BAA-138 / DSM 3043 / CIP 106854 / NCIMB 13768 / 1H11).